Consider the following 294-residue polypeptide: Cell division protein FtsQ (294 aa).

Over 1–26 the chain is Cytoplasmic; sequence MARGPNRRRVDRVPGERRRRLARAMA. Residues 27–49 form a helical membrane-spanning segment; it reads LALPSILALAALGGAATLGWRVG. Over 50–294 the chain is Periplasmic; it reads WKSDLLRVRE…GPQGRSSSLR (245 aa). The 69-residue stretch at 55–123 folds into the POTRA domain; that stretch reads LRVREIRFEG…PALEVQLAER (69 aa). Residues 266 to 294 form a disordered region; it reads AGRRGEPDGRSSYAAGGGGGPQGRSSSLR.

It belongs to the FtsQ/DivIB family. FtsQ subfamily.

The protein localises to the cell inner membrane. In terms of biological role, essential cell division protein. The protein is Cell division protein FtsQ of Anaeromyxobacter sp. (strain K).